Here is a 180-residue protein sequence, read N- to C-terminus: ATP-dependent protease subunit HslV (180 aa).

The active site involves Thr2. Residues Gly157, Cys160, and Ser163 each coordinate Na(+).

The protein belongs to the peptidase T1B family. HslV subfamily. In terms of assembly, a double ring-shaped homohexamer of HslV is capped on each side by a ring-shaped HslU homohexamer. The assembly of the HslU/HslV complex is dependent on binding of ATP.

Its subcellular location is the cytoplasm. The enzyme catalyses ATP-dependent cleavage of peptide bonds with broad specificity.. Its activity is regulated as follows. Allosterically activated by HslU binding. Functionally, protease subunit of a proteasome-like degradation complex believed to be a general protein degrading machinery. The chain is ATP-dependent protease subunit HslV from Wigglesworthia glossinidia brevipalpis.